The chain runs to 290 residues: Taxis protein CheF1 (290 aa).

In terms of assembly, interacts with chemotaxis (Che) proteins as well as flagella accessory (Fla) proteins.

Its function is as follows. Involved in taxis signal transduction. Essential for the ability to control the direction of flagellar rotation. May have a role between CheY and the flagellum. This chain is Taxis protein CheF1 (cheF1), found in Halobacterium salinarum (strain ATCC 29341 / DSM 671 / R1).